A 424-amino-acid chain; its full sequence is Inhibin beta A chain (424 aa).

Residues 1 to 20 (MPLLWLRGFLLASCWIIVRS) form the signal peptide. Residues 21-308 (SPTPGSEGHG…EDHPHRRRRR (288 aa)) constitute a propeptide that is removed on maturation. N165 is a glycosylation site (N-linked (GlcNAc...) asparagine). Basic and acidic residues predominate over residues 264 to 275 (EVDGDGKKKDGS). The tract at residues 264–306 (EVDGDGKKKDGSDGGLEEEKEQSHRPFLMLQARQSEDHPHRRR) is disordered. Cystine bridges form between C312–C320, C319–C389, C348–C421, and C352–C423.

It belongs to the TGF-beta family. As to quaternary structure, dimeric, linked by one or more disulfide bonds. Inhibin A is a dimer of alpha/INHA and beta-A/INHBA. Activin A is a homodimer of beta-A/INHBA. Activin AB is a dimer of beta-A/INHBA and beta-B/INHBB. Interacts with FST and FSTL3; these interactions prevent activin A interaction to its type II receptor. Activin A interacts with ACVR2A. Activin A interacts with BMPR2. Inhibin A interacts with ACVR1; this interaction creates a non-signaling complex (NSC) that inhibits ACVR1-mediated BMP signaling. Inhibin A interacts with ACVR2A. In terms of tissue distribution, uterus, ovary and liver.

The protein resides in the secreted. In terms of biological role, inhibins/activins are involved in regulating a number of diverse functions such as hypothalamic and pituitary hormone secretion, gonadal hormone secretion, germ cell development and maturation, erythroid differentiation, insulin secretion, nerve cell survival, embryonic axial development or bone growth, depending on their subunit composition. Functionally, activin A is a homodimer of INHBA that plays a role in several essential biological processes including embryonic development, stem cell maintenance and differentiation, haematopoiesis, cell proliferation and tissue fibrosis. Signals through type I (such as ACVR1B or ACVR1C) and type II receptors (such as ACVR2A, ACVR2B or BMPR2) which, upon ligand binding, phosphorylate SMAD2 and SMAD3 intracellular signaling mediators that form a complex with SMAD4, translocate to the nucleus and modulate gene expression. Can also activate alternative non-canonical intracellular signaling pathways including the p38 MAPK, extracellular signal-regulated kinases 1/2 (ERK1/2) and c-Jun N-terminal kinases (JNKs) to modulate cell migration and differentiation. Alternatively, promotes osteoblastic differentiation via ACVRL1-SMAD1/5/9 pathway. In addition, can engage the type I receptor ACVR1 to form an ACVR1-activin A-type II receptor non-signaling complex (NSC) that renders receptors unavailable for engagement with BMPs, hence resulting in an apparent inhibition of ACVR1-mediated BMP signaling. Its function is as follows. Inhibin A is a dimer of alpha/INHA and beta-A/INHBA that functions as a feedback regulator in the hypothalamic-pituitary-gonadal (HPG) axis. Inhibits the secretion of FSH from the anterior pituitary gland by acting on pituitary gonadotrope cells. Antagonizes activin A by binding to the proteoglycan, betaglycan, and forming a stable complex with and, thereby, sequestering type II activin receptors while excluding type I receptor. This chain is Inhibin beta A chain (Inhba), found in Mus musculus (Mouse).